We begin with the raw amino-acid sequence, 462 residues long: L-seryl-tRNA(Sec) selenium transferase (462 aa).

Lys292 carries the post-translational modification N6-(pyridoxal phosphate)lysine.

It belongs to the SelA family. Pyridoxal 5'-phosphate serves as cofactor.

The protein resides in the cytoplasm. The enzyme catalyses L-seryl-tRNA(Sec) + selenophosphate + H(+) = L-selenocysteinyl-tRNA(Sec) + phosphate. It participates in aminoacyl-tRNA biosynthesis; selenocysteinyl-tRNA(Sec) biosynthesis; selenocysteinyl-tRNA(Sec) from L-seryl-tRNA(Sec) (bacterial route): step 1/1. Converts seryl-tRNA(Sec) to selenocysteinyl-tRNA(Sec) required for selenoprotein biosynthesis. The protein is L-seryl-tRNA(Sec) selenium transferase of Geotalea daltonii (strain DSM 22248 / JCM 15807 / FRC-32) (Geobacter daltonii).